A 492-amino-acid chain; its full sequence is 56 kDa U1 small nuclear ribonucleoprotein component (492 aa).

The span at 1 to 15 (MRPRRRGLAYHHTKP) shows a compositional bias: basic residues. 2 disordered regions span residues 1–35 (MRPR…QRRK) and 300–371 (DQFP…NKPG). Polar residues predominate over residues 18–30 (QLSQGHYPTTSND). Positions 310 to 321 (SNSPSSNSISSS) are enriched in low complexity. Over residues 329–353 (TSYQTQPQRHAVNKPSNVLNSSNRH) the composition is skewed to polar residues.

Component of the 18S U1 snRNP particle, a subcomplex of the spliceosome. Interacts with the nuclear cap-binding complex CBC1-CBC2 (yCBC). Directly contacts intronic sequences of substrate pre-RNA.

The protein localises to the nucleus. In terms of biological role, component of the U1 snRNP particle, which recognizes and binds the 5'-splice site of pre-mRNA. Together with other non-snRNP factors, U1 snRNP forms the spliceosomal commitment complex, that targets pre-mRNA to the splicing pathway. This is 56 kDa U1 small nuclear ribonucleoprotein component (SNU56) from Saccharomyces cerevisiae (strain ATCC 204508 / S288c) (Baker's yeast).